We begin with the raw amino-acid sequence, 4579 residues long: METKENRWVPVTVLPGCVGCRTVAALASWTVRDVKERIFAETGFPVSEQRLWRGGRELSDWIKIGDLTSKNCHLFVNLQSKGLKGGGRFGQTTPPLVDFLKDILRRYPEGGQILKELIQNAEDAGATEVKFLYDETQYGTETLWSKDMAPYQGPALYVYNNAVFTPEDWHGIQEIARSRKKDDPLKVGRFGIGFNSVYHITDVPCIFSGDQIGMLDPHQTLFGPHESGQCWNLKDDSKEISELSDQFAPFVGIFGSTKETFINGNFPGTFFRFPLRLQPSQLSSNLYNKQKVLELFESFRADADTVLLFLKSVQDVSLYVREADGTEKLVFRVTSSESKALKHERPNSIKILGTAISNYCKKTPSNNITCVTYHVNIVLEEESTKDAQKTSWLVCNSVGGRGISSKLDSLADELKFVPIIGIAMPLSSRDDEAKGATSDFSGKAFCFLPLPPGEESSTGLPVHISGFFGLTDNRRSIKWRELDQWRDPAALWNEFLVMNVVPKAYATLILDSIKRLEMEKSSDFPLSVDVIYKLWPEASKVKVHWQPVLEPLFSELLQNAVIYSISCDWVRLEQVYFSELDENLEYTKTVLNYLQSSGKQIAKVPGNVDAAVQLTAASGTTPVRKVTPAWVRQVLRKCAHLGCAEEKLHLLEFVLSDQAYSELLGLELLPLQNGNFVPFSSSVSDQDVIYITSAEYPRSLFPSLEGRFILDNLKPHLVAALKEAAQTRGRPCTQLQLLNPERFARLIKEVMNTFWPGRELIVQWYPFDENRNHPSVSWLKMVWKNLYIHFSEDLTLFDEMPLIPRTILEEGQTCVELIRLRIPSLVILDDESEAQLPEFLADIVQKLGGFVLKKLDASIQHPLIKKYIHSPLPSAVLQIMEKMPLQKLCNQITSLLPTHKDALRKFLASLTDSSEKEKRIIQELAIFKRINHSSDQGISSYTKLKGCKVLHHTAKLPADLRLSISVIDSSDEATIRLANMLKIEQLKTTSCLKLVLKDIENAFYSHEEVTQLMLWVLENLSSLKNENPNVLEWLTPLKFIQISQEQMVSAGELFDPDIEVLKDLFCNEEGTYFPPSVFTSPDILHSLRQIGLKNEASLKEKDVVQVAKKIEALQVGACPDQDVLLKKAKTLLLVLNKNHTLLQSSEGKMTLKKIKWVPACKERPPNYPGSLVWKGDLCNLCAPPDMCDVGHAILIGSSLPLVESIHVNLEKALGIFTKPSLSAVLKHFKIVVDWYSSKTFSDEDYYQFQHILLEIYGFMHDHLNEGKDSFRALKFPWVWTGKKFCPLAQAVIKPIHDLDLQPYLHNVPKTMAKFHQLFKVCGSIEELTSDHISMVIQKIYLKSDQDLSEQESKQNLHLMLNIIRWLYSNQIPASPNTPVPIHHSKNPSKLIMKPIHECCYCDIKVDDLNDLLEDSVEPIILVHEDIPMKTAEWLKVPCLSTRLINPENMGFEQSGQREPLTVRIKNILEEYPSVSDIFKELLQNADDANATECSFLIDMRRNMDIRENLLDPGMAACHGPALWSFNNSQFSDSDFVNITRLGESLKRGEVDKVGKFGLGFNSVYHITDIPIIMSREFMIMFDPNINHISKHIKDKSNPGIKINWSKQQKRLRKFPNQFKPFIDVFGCQLPLTVEAPYSYNGTLFRLSFRTQQEAKVSEVSSTCYNTADIYSLVDEFSLCGHRLIIFTQSVKSMYLKYLKIEETNPSLAQDTVIIKKKSCSSKALNTPVLSVLKEAAKLMKTCSSSNKKLPSDEPKSSCILQITVEEFHHVFRRIADLQSPLFRGPDDDPAALFEMAKSGQSKKPSDELSQKTVECTTWLLCTCMDTGEALKFSLSESGRRLGLVPCGAVGVQLSEIQDQKWTVKPHIGEVFCYLPLRIKTGLPVHINGCFAVTSNRKEIWKTDTKGRWNTTFMRHVIVKAYLQVLSVLRDLATSGELMDYTYYAVWPDPDLVHDDFSVICQGFYEDIAHGKGKELTKVFSDGSTWVSMKNVRFLDDSILKRRDVGSAAFKIFLKYLKKTGSKNLCAVELPSSVKLGFEEAGCKQILLENTFSEKQFFSEVFFPNIQEIEAELRDPLMIFVLNEKVDEFSGVLRVTPCIPCSLEGHPLVLPSRLIHPEGRVAKLFDIKDGRFPYGSTQDYLNPIILIKLVQLGMAKDDILWDDMLERAVSVAEINKSDHVAACLRSSILLSLIDEKLKIRDPRAKDFAAKYQTIRFLPFLTKPAGFSLDWKGNSFKPETMFAATDLYTAEHQDIVCLLQPILNENSHSFRGCGSVSLAVKEFLGLLKKPTVDLVINQLKEVAKSVDDGITLYQENITNACYKYLHEALMQNEITKMSIIDKLKPFSFILVENAYVDSEKVSFHLNFEAAPYLYQLPNKYKNNFRELFETVGVRQSCTVEDFALVLESIDQERGTKQITEENFQLCRRIISEGIWSLIREKKQEFCEKNYGKILLPDTNLMLLPAKSLCYNDCPWIKVKDTTVKYCHADIPREVAVKLGAVPKRHKALERYASNVCFTTLGTEFGQKEKLTSRIKSILNAYPSEKEMLKELLQNADDAKATEICFVFDPRQHPVDRIFDDKWAPLQGPALCVYNNQPFTEDDVRGIQNLGKGTKEGNPYKTGQYGIGFNSVYHITDCPSFISGNDILCIFDPHARYAPGATSISPGRMFRDLDADFRTQFSDVLDLYLGTHFKLDNCTMFRFPLRNAEMAKVSEISSVPASDRMVQNLLDKLRSDGAELLMFLNHMEKISICEIDKSTGALNVLYSVKGKITDGDRLKRKQFHASVIDSVTKKRQLKDIPVQQITYTMDTEDSEGNLTTWLICNRSGFSSMEKVSKSVISAHKNQDITLFPRGGVAACITHNYKKPHRAFCFLPLSLETGLPFHVNGHFALDSARRNLWRDDNGVGVRSDWNNSLMTALIAPAYVELLIQLKKRYFPGSDPTLSVLQNTPIHVVKDTLKKFLSFFPVNRLDLQPDLYCLVKALYNCIHEDMKRLLPVVRAPNIDGSDLHSAVIITWINMSTSNKTRPFFDNLLQDELQHLKNADYNITTRKTVAENVYRLKHLLLEIGFNLVYNCDETANLYHCLIDADIPVSYVTPADIRSFLMTFSSPDTNCHIGKLPCRLQQTNLKLFHSLKLLVDYCFKDAEENEIEVEGLPLLITLDSVLQTFDAKRPKFLTTYHELIPSRKDLFMNTLYLKYSNILLNCKVAKVFDISSFADLLSSVLPREYKTKSCTKWKDNFASESWLKNAWHFISESVSVKEDQEETKPTFDIVVDTLKDWALLPGTKFTVSANQLVVPEGDVLLPLSLMHIAVFPNAQSDKVFHALMKAGCIQLALNKICSKDSAFVPLLSCHTANIESPTSILKALHYMVQTSTFRAEKLVENDFEALLMYFNCNLNHLMSQDDIKILKSLPCYKSISGRYVSIGKFGTCYVLTKSIPSAEVEKWTQSSSSAFLEEKIHLKELYEVIGCVPVDDLEVYLKHLLPKIENLSYDAKLEHLIYLKNRLSSAEELSEIKEQLFEKLESLLIIHDANSRLKQAKHFYDRTVRVFEVMLPEKLFIPNDFFKKLEQLIKPKNHVTFMTSWVEFLRNIGLKYILSQQQLLQFAKEISVRANTENWSKETLQNTVDILLHHIFQERMDLLSGNFLKELSLIPFLCPERAPAEFIRFHPQYQEVNGTLPLIKFNGAQVNPKFKQCDVLQLLWTSCPILPEKATPLSIKEQEGSDLGPQEQLEQVLNMLNVNLDPPLDKVINNCRNICNITTLDEEMVKTRAKVLRSIYEFLSAEKREFRFQLRGVAFVMVEDGWKLLKPEEVVINLEYESDFKPYLYKLPLELGTFHQLFKHLGTEDIISTKQYVEVLSRIFKNSEGKQLDPNEMRTVKRVVSGLFRSLQNDSVKVRSDLENVRDLALYLPSQDGRLVKSSILVFDDAPHYKSRIQGNIGVQMLVDLSQCYLGKDHGFHTKLIMLFPQKLRPRLLSSILEEQLDEETPKVCQFGALCSLQGRLQLLLSSEQFITGLIRIMKHENDNAFLANEEKAIRLCKALREGLKVSCFEKLQTTLRVKGFNPIPHSRSETFAFLKRFGNAVILLYIQHSDSKDINFLLALAMTLKSATDNLISDTSYLIAMLGCNDIYRIGEKLDSLGVKYDSSEPSKLELPMPGTPIPAEIHYTLLMDPMNVFYPGEYVGYLVDAEGGDIYGSYQPTYTYAIIVQEVEREDADNSSFLGKIYQIDIGYSEYKIVSSLDLYKFSRPEESSQSRDSAPSTPTSPTEFLTPGLRSIPPLFSGRESHKTSSKHQSPKKLKVNSLPEILKEVTSVVEQAWKLPESERKKIIRRLYLKWHPDKNPENHDIANEVFKHLQNEINRLEKQAFLDQNADRASRRTFSTSASRFQSDKYSFQRFYTSWNQEATSHKSERQQQNKEKCPPSAGQTYSQRFFVPPTFKSVGNPVEARRWLRQARANFSAARNDLHKNANEWVCFKCYLSTKLALIAADYAVRGKSDKDVKPTALAQKIEEYSQQLEGLTNDVHTLEAYGVDSLKTRYPDLLPFPQIPNDRFTSEVAMRVMECTACIIIKLENFMQQKV.

In terms of domain architecture, Ubiquitin-like spans 9 to 84; it reads VPVTVLPGCV…FVNLQSKGLK (76 aa). Position 943 is an N6-acetyllysine (Lys-943). Ser-1779 and Ser-2511 each carry phosphoserine. Thr-2516 carries the phosphothreonine modification. Residue Ser-3435 is modified to Phosphoserine. Disordered regions lie at residues 4248–4273 and 4279–4298; these read PEES…TPGL and LFSG…PKKL. The segment covering 4254 to 4267 has biased composition (polar residues); it reads SRDSAPSTPTSPTE. The residue at position 4261 (Thr-4261) is a Phosphothreonine. Ser-4264 carries the phosphoserine modification. The span at 4288–4298 shows a compositional bias: basic residues; sequence TSSKHQSPKKL. The 88-residue stretch at 4306–4393 folds into the J domain; that stretch reads ILKEVTSVVE…ASRFQSDKYS (88 aa). The segment at 4405–4427 is disordered; the sequence is ATSHKSERQQQNKEKCPPSAGQT. The span at 4406–4420 shows a compositional bias: basic and acidic residues; that stretch reads TSHKSERQQQNKEKC. The HEPN domain occupies 4451-4567; that stretch reads LRQARANFSA…MRVMECTACI (117 aa).

Highly expressed in the central nervous system. Also found in skeletal muscle and at low levels in pancreas.

Its subcellular location is the cytoplasm. In terms of biological role, co-chaperone which acts as a regulator of the Hsp70 chaperone machinery and may be involved in the processing of other ataxia-linked proteins. The polypeptide is Sacsin (SACS) (Homo sapiens (Human)).